The chain runs to 382 residues: Methylthioribose-1-phosphate isomerase (382 aa).

The Proton donor role is filled by Asp258.

The protein belongs to the eIF-2B alpha/beta/delta subunits family. MtnA subfamily.

It localises to the cytoplasm. Its subcellular location is the nucleus. The enzyme catalyses 5-(methylsulfanyl)-alpha-D-ribose 1-phosphate = 5-(methylsulfanyl)-D-ribulose 1-phosphate. Its pathway is amino-acid biosynthesis; L-methionine biosynthesis via salvage pathway; L-methionine from S-methyl-5-thio-alpha-D-ribose 1-phosphate: step 1/6. Its function is as follows. Catalyzes the interconversion of methylthioribose-1-phosphate (MTR-1-P) into methylthioribulose-1-phosphate (MTRu-1-P). This Laccaria bicolor (strain S238N-H82 / ATCC MYA-4686) (Bicoloured deceiver) protein is Methylthioribose-1-phosphate isomerase.